The sequence spans 154 residues: Aspartate carbamoyltransferase regulatory chain (154 aa).

Zn(2+) is bound by residues cysteine 109, cysteine 114, cysteine 138, and cysteine 141.

It belongs to the PyrI family. In terms of assembly, contains catalytic and regulatory chains. Zn(2+) serves as cofactor.

In terms of biological role, involved in allosteric regulation of aspartate carbamoyltransferase. The protein is Aspartate carbamoyltransferase regulatory chain of Yersinia pseudotuberculosis serotype O:1b (strain IP 31758).